The following is a 146-amino-acid chain: Hemoglobin subunit beta (146 aa).

The region spanning E2–H146 is the Globin domain. H63 and H92 together coordinate heme b.

Belongs to the globin family. In terms of assembly, heterotetramer of two alpha chains and two beta chains. Red blood cells.

Functionally, involved in oxygen transport from gills to the various peripheral tissues. This chain is Hemoglobin subunit beta (hbb), found in Thunnus thynnus (Atlantic bluefin tuna).